The following is a 445-amino-acid chain: tRNA-2-methylthio-N(6)-dimethylallyladenosine synthase (445 aa).

The MTTase N-terminal domain maps to 13–129 (KKLFIKTYGC…LPAMARAGRG (117 aa)). 6 residues coordinate [4Fe-4S] cluster: cysteine 22, cysteine 58, cysteine 92, cysteine 163, cysteine 167, and cysteine 170. Residues 149 to 383 (TRRAPAAFLT…LTSQQKAAQE (235 aa)) enclose the Radical SAM core domain. The region spanning 383–445 (EGMVGRELGV…PNSLAGVLAA (63 aa)) is the TRAM domain.

Belongs to the methylthiotransferase family. MiaB subfamily. As to quaternary structure, monomer. [4Fe-4S] cluster is required as a cofactor.

The protein localises to the cytoplasm. The catalysed reaction is N(6)-dimethylallyladenosine(37) in tRNA + (sulfur carrier)-SH + AH2 + 2 S-adenosyl-L-methionine = 2-methylsulfanyl-N(6)-dimethylallyladenosine(37) in tRNA + (sulfur carrier)-H + 5'-deoxyadenosine + L-methionine + A + S-adenosyl-L-homocysteine + 2 H(+). Catalyzes the methylthiolation of N6-(dimethylallyl)adenosine (i(6)A), leading to the formation of 2-methylthio-N6-(dimethylallyl)adenosine (ms(2)i(6)A) at position 37 in tRNAs that read codons beginning with uridine. In Paracoccus denitrificans (strain Pd 1222), this protein is tRNA-2-methylthio-N(6)-dimethylallyladenosine synthase.